Reading from the N-terminus, the 200-residue chain is dITP/XTP pyrophosphatase (200 aa).

A substrate-binding site is contributed by 7 to 12 (SNNYHK). Asp-68 serves as the catalytic Proton acceptor. Asp-68 lines the Mg(2+) pocket. Residues Ser-69, 147 to 150 (FGYD), Lys-170, and 175 to 176 (HR) contribute to the substrate site.

Belongs to the HAM1 NTPase family. In terms of assembly, homodimer. Mg(2+) is required as a cofactor.

It catalyses the reaction XTP + H2O = XMP + diphosphate + H(+). The catalysed reaction is dITP + H2O = dIMP + diphosphate + H(+). It carries out the reaction ITP + H2O = IMP + diphosphate + H(+). Its function is as follows. Pyrophosphatase that catalyzes the hydrolysis of nucleoside triphosphates to their monophosphate derivatives, with a high preference for the non-canonical purine nucleotides XTP (xanthosine triphosphate), dITP (deoxyinosine triphosphate) and ITP. Seems to function as a house-cleaning enzyme that removes non-canonical purine nucleotides from the nucleotide pool, thus preventing their incorporation into DNA/RNA and avoiding chromosomal lesions. The sequence is that of dITP/XTP pyrophosphatase from Acholeplasma laidlawii (strain PG-8A).